Reading from the N-terminus, the 466-residue chain is Ribulose bisphosphate carboxylase large chain (466 aa).

Lys5 carries the N6,N6,N6-trimethyllysine modification. Residues Asn114 and Thr164 each coordinate substrate. Residue Lys166 is the Proton acceptor of the active site. Lys168 contacts substrate. Positions 192, 194, and 195 each coordinate Mg(2+). Residue Lys192 is modified to N6-carboxylysine. His285 acts as the Proton acceptor in catalysis. Arg286, His318, and Ser370 together coordinate substrate.

Belongs to the RuBisCO large chain family. Type I subfamily. In terms of assembly, heterohexadecamer of 8 large chains and 8 small chains; disulfide-linked. The disulfide link is formed within the large subunit homodimers. Requires Mg(2+) as cofactor. In terms of processing, the disulfide bond which can form in the large chain dimeric partners within the hexadecamer appears to be associated with oxidative stress and protein turnover.

It is found in the plastid. Its subcellular location is the chloroplast. The enzyme catalyses 2 (2R)-3-phosphoglycerate + 2 H(+) = D-ribulose 1,5-bisphosphate + CO2 + H2O. The catalysed reaction is D-ribulose 1,5-bisphosphate + O2 = 2-phosphoglycolate + (2R)-3-phosphoglycerate + 2 H(+). Functionally, ruBisCO catalyzes two reactions: the carboxylation of D-ribulose 1,5-bisphosphate, the primary event in carbon dioxide fixation, as well as the oxidative fragmentation of the pentose substrate in the photorespiration process. Both reactions occur simultaneously and in competition at the same active site. This is Ribulose bisphosphate carboxylase large chain from Caltha palustris (Yellow marsh marigold).